The following is a 345-amino-acid chain: G-protein coupled receptor family C group 5 member D (345 aa).

Residues M1–E27 are Extracellular-facing. A helical transmembrane segment spans residues S28 to M48. At R49–Q63 the chain is on the cytoplasmic side. The chain crosses the membrane as a helical span at residues L64 to L84. Topologically, residues N85–Y93 are extracellular. Residues F94–L114 form a helical membrane-spanning segment. Topologically, residues V115 to S123 are cytoplasmic. Residues F124 to A144 traverse the membrane as a helical segment. Residues T145 to N167 are Extracellular-facing. A helical membrane pass occupies residues V168 to S188. Topologically, residues K189–R204 are cytoplasmic. The chain crosses the membrane as a helical span at residues L205–L225. Residues R226–D239 lie on the Extracellular side of the membrane. The helical transmembrane segment at P240–P260 threads the bilayer. Topologically, residues E261–V345 are cytoplasmic.

Belongs to the G-protein coupled receptor 3 family. In terms of assembly, homodimer. In terms of tissue distribution, widely expressed in the peripheral system. Expression pattern is high in pancreas, medium in kidney, small intestine, spleen and testis, low in lung, colon, leukocyte, prostate and thymus and not detectable in brain, heart, liver, placenta, skeletal muscle and ovary.

The protein localises to the cell membrane. Its function is as follows. G-protein coupled receptor involved in hard keratin expression and likely plays a role in the development of hair and nails. This is G-protein coupled receptor family C group 5 member D (GPRC5D) from Homo sapiens (Human).